Here is a 487-residue protein sequence, read N- to C-terminus: Phosphatidylserine synthase 2 (487 aa).

Residues 1–10 show a composition bias toward basic and acidic residues; sequence MRRGERRDAG. A disordered region spans residues 1–50; that stretch reads MRRGERRDAGGPRPESPVPAGRASLEEPPDGPSAGQATGPGEGRRSTESE. Residues 1–62 are Cytoplasmic-facing; the sequence is MRRGERRDAG…DDGTNTFFWR (62 aa). 2 positions are modified to phosphoserine: serine 16 and serine 24. A helical membrane pass occupies residues 63-83; the sequence is AHTLTVLFILTCTLGYVTLLE. Residues 84–96 are Lumenal-facing; it reads ETPQDTAYNTKRG. Residues 97-117 form a helical membrane-spanning segment; it reads IVASILVFLCFGVTQAKDGPF. Topologically, residues 118–126 are cytoplasmic; it reads SRPHPAYWR. A helical membrane pass occupies residues 127-147; that stretch reads FWLCVSVVYELFLIFILFQTV. Residues 148-313 lie on the Lumenal side of the membrane; it reads QDGRQFLKYV…EWKPASSLRR (166 aa). Asparagine 181 is a glycosylation site (N-linked (GlcNAc...) asparagine). A helical transmembrane segment spans residues 314-334; it reads WLAVCGIILVFLLAELNTFYL. Position 335 (lysine 335) is a topological domain, cytoplasmic. A helical membrane pass occupies residues 336–356; that stretch reads FVLWMPPEHYLVLLRLVFFVN. Over 357–376 the chain is Lumenal; that stretch reads VGGVAMREIYDFMDDPKPHK. Residues 377-397 traverse the membrane as a helical segment; that stretch reads KLGPQAWLVAAITATELLIVV. Residues 398–403 are Cytoplasmic-facing; it reads KYDPHT. A helical transmembrane segment spans residues 404–424; it reads LTLSLPFYISQCWTLGSVLAL. Topologically, residues 425–487 are lumenal; that stretch reads TWTVWRFFLR…AEGEGAPTPN (63 aa). The segment at 451 to 487 is disordered; sequence KDDQGSTVGNGDQHPLGLDEDLLGPGVAEGEGAPTPN. Position 485 is a phosphothreonine (threonine 485).

The protein belongs to the phosphatidyl serine synthase family.

The protein localises to the endoplasmic reticulum membrane. It catalyses the reaction a 1,2-diacyl-sn-glycero-3-phosphoethanolamine + L-serine = a 1,2-diacyl-sn-glycero-3-phospho-L-serine + ethanolamine. The catalysed reaction is 1-hexadecanoyl-2-(9Z-octadecenoyl)-sn-glycero-3-phosphoethanolamine + L-serine = 1-hexadecanoyl-2-(9Z-octadecenoyl)-sn-glycero-3-phospho-L-serine + ethanolamine. It carries out the reaction 1-hexadecanoyl-2-(4Z,7Z,10Z,13Z,16Z,19Z-docosahexaenoyl)-sn-glycero-3-phosphoethanolamine + L-serine = 1-hexadecanoyl-2-(4Z,7Z,10Z,13Z,16Z,19Z-docosahexaenoyl)-sn-glycero-3-phosphoserine + ethanolamine. The enzyme catalyses 1-octadecanoyl-2-(5Z,8Z,11Z,14Z)-eicosatetraenoyl-sn-glycero-3-phosphoethanolamine + L-serine = 1-octadecanoyl-2-(5Z,8Z,11Z,14Z)-eicosatetraenoyl-sn-glycero-3-phosphoserine + ethanolamine. It catalyses the reaction 1-octadecanoyl-2-(4Z,7Z,10Z,13Z,16Z,19Z-docosahexaenoyl)-sn-glycero-3-phosphoethanolamine + L-serine = 1-octadecanoyl-2-(4Z,7Z,10Z,13Z,16Z,19Z-docosahexaenoyl)-sn-glycero-3-phosphoserine + ethanolamine. The catalysed reaction is 1-(1Z-octadecenyl)-2-(4Z,7Z,10Z,13Z,16Z,19Z-docosahexaenoyl)-sn-glycero-3-phosphoethanolamine + L-serine = 1-(1Z-octadecenyl)-2-(4Z,7Z,10Z,13Z,16Z,19Z-docosahexaenoyl)-sn-glycero-3-phospho-L-serine + ethanolamine. It carries out the reaction 1-octadecanoyl-2-(9Z-octadecenoyl)-sn-glycero-3-phosphoethanolamine + L-serine = 1-octadecanoyl-2-(9Z-octadecenoyl)-sn-glycero-3-phospho-L-serine + ethanolamine. The enzyme catalyses 1-(1Z-octadecenyl)-2-(9Z-octadecenoyl)-sn-glycero-3-phosphoethanolamine + L-serine = 1-(1Z-octadecenyl)-2-(9Z-octadecenoyl)-sn-glycero-3-phospho-L-serine + ethanolamine. It catalyses the reaction 1-(1Z-octadecenyl)-2-(5Z,8Z,11Z,14Z- eicosatetraenoyl)-sn-glycero-3-phosphoethanolamine + L-serine = 1-(1Z-octadecenyl)-2-(5Z,8Z,11Z,14Z-eicosatetraenoyl)-sn-glycero-3-phospho-L-serine + ethanolamine. It functions in the pathway phospholipid metabolism; phosphatidylserine biosynthesis. Its activity is regulated as follows. Requires calcium ions. Inhibited by exogenous phosphatidylserine. Functionally, catalyzes a base-exchange reaction in which the polar head group of phosphatidylethanolamine (PE) or phosphatidylcholine (PC) is replaced by L-serine. Catalyzes the conversion of phosphatatidylethanolamine and does not act on phosphatidylcholine. Can utilize both phosphatidylethanolamine (PE) plasmalogen and diacyl PE as substrate and the latter is six times better utilized, indicating the importance of an ester linkage at the sn-1 position. Although it shows no sn-1 fatty acyl preference, exhibits significant preference towards docosahexaenoic acid (22:6n-3) compared with 18:1 or 20:4 at the sn-2 position. The chain is Phosphatidylserine synthase 2 (PTDSS2) from Homo sapiens (Human).